Here is a 355-residue protein sequence, read N- to C-terminus: Daphnetin O-methyltransferase 1 (355 aa).

S-adenosyl-L-homocysteine is bound by residues Asp-222, Asp-242, and Lys-256. His-260 acts as the Proton acceptor in catalysis.

This sequence belongs to the class I-like SAM-binding methyltransferase superfamily. Cation-independent O-methyltransferase family. COMT subfamily.

The catalysed reaction is 7,8-dihydroxycoumarin + S-adenosyl-L-methionine = 7-hydroxy-8-methoxycoumarin + S-adenosyl-L-homocysteine + H(+). Its pathway is aromatic compound metabolism. It participates in secondary metabolite biosynthesis. Its function is as follows. O-methyltransferase involved in the biosynthesis of coumarins natural products such as daphnetin derivatives. Catalyzes specifically the methylation of daphnetin (7,8-dihydroxycoumarin) to produce hydrangetin (7-hydroxy-8-methoxycoumarin). Probably involved in acclimation to low temperature conditions. The chain is Daphnetin O-methyltransferase 1 from Secale cereale (Rye).